A 1567-amino-acid polypeptide reads, in one-letter code: Putative DEAH-box ATP-dependent helicase UM11114 (1567 aa).

2 disordered regions span residues 1–95 (MAPR…PGSK) and 670–734 (ESSV…ETRR). Over residues 10-20 (IKSSGTTSSKA) the composition is skewed to polar residues. Low complexity-rich tracts occupy residues 39–48 (TKAAKQQQTQ) and 55–73 (AISA…AASS). The span at 74–83 (AGGGGGGGQG) shows a compositional bias: gly residues. Composition is skewed to polar residues over residues 670–687 (ESSV…TPTG) and 713–726 (LQRQ…SPSY). A Helicase ATP-binding domain is found at 746–924 (LGLIRSNRVV…FGKAPCISIP (179 aa)). An ATP-binding site is contributed by 759–766 (GETGCGKT). The DEAH box motif lies at 871–874 (DEVH). One can recognise a Helicase C-terminal domain in the interval 1003–1184 (VVRYVVERAE…SLFLEVKSMR (182 aa)).

The protein belongs to the DEAD box helicase family. DEAH subfamily.

The sequence is that of Putative DEAH-box ATP-dependent helicase UM11114 from Mycosarcoma maydis (Corn smut fungus).